Consider the following 148-residue polypeptide: MNKIQQINDKELQSGILSPHQSWHNEYKDNAYIYIGNLNRELTEGDILTVFSEYGVPVDVILSRDENTGESQGFAYLKYEDQRSTILAVDNLNGFKIGGRALKIDHTFYRPKRSLQKYYEAVKEELDRDIVSKNNAEKLILAKKDQPN.

Residues 31-109 enclose the RRM domain; sequence AYIYIGNLNR…RALKIDHTFY (79 aa).

The protein belongs to the IST3 family. Component of the 45S U1.U2.U4/U6.U5 penta-snRNP particle, a subcomplex of the spliceosome. Belongs to the CWC complex (or CEF1-associated complex), a spliceosome sub-complex reminiscent of a late-stage spliceosome composed of the U2, U5 and U6 snRNAs and at least BUD13, BUD31, BRR2, CDC40, CEF1, CLF1, CUS1, CWC2, CWC15, CWC21, CWC22, CWC23, CWC24, CWC25, CWC27, ECM2, HSH155, IST3, ISY1, LEA1, MSL1, NTC20, PRP8, PRP9, PRP11, PRP19, PRP21, PRP22, PRP45, PRP46, SLU7, SMB1, SMD1, SMD2, SMD3, SMX2, SMX3, SNT309, SNU114, SPP2, SYF1, SYF2, RSE1 and YJU2. Belongs to the pre-mRNA retention and splicing (RES) complex composed of at least BUD13, IST3 and PML1. Subunit of the U2 snRNP. Interacts with RDS3.

Its subcellular location is the cytoplasm. It localises to the nucleus. Required for pre-mRNA splicing and spliceosome assembly. As part of the pre-mRNA retention and splicing (RES) complex, required for nuclear pre-mRNA retention and efficient splicing. Required for MER1-activated splicing. The chain is U2 snRNP component IST3 (IST3) from Saccharomyces cerevisiae (strain ATCC 204508 / S288c) (Baker's yeast).